We begin with the raw amino-acid sequence, 335 residues long: Nuclear transcription factor Y subunit gamma (335 aa).

The protein belongs to the NFYC/HAP5 subunit family. As to quaternary structure, heterotrimeric transcription factor composed of three components, NF-YA, NF-YB and NF-YC. NF-YB and NF-YC must interact and dimerize for NF-YA association and DNA binding.

Its subcellular location is the nucleus. Functionally, component of the sequence-specific heterotrimeric transcription factor (NF-Y) which specifically recognizes a 5'-CCAAT-3' box motif found in the promoters of its target genes. NF-Y can function as both an activator and a repressor, depending on its interacting cofactors. This Rattus norvegicus (Rat) protein is Nuclear transcription factor Y subunit gamma (Nfyc).